We begin with the raw amino-acid sequence, 621 residues long: MERYLSRRESGFHIHRSDDNSLMRRIYSSMNMFNSYHANCWPTDAGRTGAIFNLEFNADGNVVVAATERKCVLVFDAITQKEIFKVPDAHTDSVNCIKFFDERLFATGSDDFTVALWDLRNMKQKLRVLHGHSNWVKNIEYSSKDKLLVSSGFDGSIFTWDINSQTEQGLISQRVFHASGLMRCRISPTGDKLVLCTSGGYIMIIHHLDLTTLHKDLCGFRPGIYRLMQLGEQYIPQAAKYDHVFSKRQKKNRVELVTDFPENNDAEMIMALQIHPHCCCMLTRNVSCDEQSEWTCIHDINEEPVRSEDEQDEVEPQPKRKRVSTTLASRSSLNESQDQDTVGLTPRQARRPLRVSSVQVFQLDNSGAGRGASDNPSVLTRSDSFIPDIWAAEVTVQERAIRQNRARVSNNHVSGYNFVYAISSGVLPLRQLGANSLMGSSTSPRPLTTPPPTESNQSSSSSSSSSSSSSSSSSSNNSDTTVRLEIGNRLRLRSFNSPVTTPTFKENGHSILVNAKKLLYYAAETNTKPGFIKEPGFSADGRVVCSPYGNGVRLFGYSEDCCDYPKCQAFEEVKSKPRKLVELAKITEHQDVVLCAKFSPREPLLVTGCNGGEVTWYRPNL.

WD repeat units follow at residues 46–85 (GRTGAIFNLEFNADGNVVVAATERKCVLVFDAITQKEIFK), 89–127 (AHTDSVNCIKFFDERLFATGSDDFTVALWDLRNMKQKLR), 131–170 (GHSNWVKNIEYSSKDKLLVSSGFDGSIFTWDINSQTEQGL), and 176–215 (FHASGLMRCRISPTGDKLVLCTSGGYIMIIHHLDLTTLHK). 2 disordered regions span residues 305 to 349 (VRSE…PRQA) and 437 to 483 (LMGS…TTVR). A Phosphoserine modification is found at S307. The span at 324-342 (STTLASRSSLNESQDQDTV) shows a compositional bias: polar residues. Over residues 454-478 (ESNQSSSSSSSSSSSSSSSSSSNNS) the composition is skewed to low complexity. S494 and S497 each carry phosphoserine. The WD 5 repeat unit spans residues 588-621 (EHQDVVLCAKFSPREPLLVTGCNGGEVTWYRPNL).

It belongs to the WD repeat DCAF10 family.

In Drosophila melanogaster (Fruit fly), this protein is DDB1- and CUL4-associated factor 10 homolog.